A 274-amino-acid polypeptide reads, in one-letter code: Formamidopyrimidine-DNA glycosylase (274 aa).

Residue Pro-2 is the Schiff-base intermediate with DNA of the active site. Glu-3 serves as the catalytic Proton donor. The Proton donor; for beta-elimination activity role is filled by Lys-58. Positions 91 and 110 each coordinate DNA. Residues 238–272 form an FPG-type zinc finger; sequence QVYDKTGQECVRCGTIIEKIQLGGRGTHFCPNCQR. Catalysis depends on Arg-262, which acts as the Proton donor; for delta-elimination activity.

The protein belongs to the FPG family. As to quaternary structure, monomer. It depends on Zn(2+) as a cofactor.

The catalysed reaction is Hydrolysis of DNA containing ring-opened 7-methylguanine residues, releasing 2,6-diamino-4-hydroxy-5-(N-methyl)formamidopyrimidine.. It catalyses the reaction 2'-deoxyribonucleotide-(2'-deoxyribose 5'-phosphate)-2'-deoxyribonucleotide-DNA = a 3'-end 2'-deoxyribonucleotide-(2,3-dehydro-2,3-deoxyribose 5'-phosphate)-DNA + a 5'-end 5'-phospho-2'-deoxyribonucleoside-DNA + H(+). Functionally, involved in base excision repair of DNA damaged by oxidation or by mutagenic agents. Acts as a DNA glycosylase that recognizes and removes damaged bases. Has a preference for oxidized purines, such as 7,8-dihydro-8-oxoguanine (8-oxoG). Has AP (apurinic/apyrimidinic) lyase activity and introduces nicks in the DNA strand. Cleaves the DNA backbone by beta-delta elimination to generate a single-strand break at the site of the removed base with both 3'- and 5'-phosphates. The protein is Formamidopyrimidine-DNA glycosylase of Streptococcus pneumoniae (strain ATCC BAA-255 / R6).